The chain runs to 305 residues: GTP cyclohydrolase FolE2 (305 aa).

It belongs to the GTP cyclohydrolase IV family.

The enzyme catalyses GTP + H2O = 7,8-dihydroneopterin 3'-triphosphate + formate + H(+). Its pathway is cofactor biosynthesis; 7,8-dihydroneopterin triphosphate biosynthesis; 7,8-dihydroneopterin triphosphate from GTP: step 1/1. In terms of biological role, converts GTP to 7,8-dihydroneopterin triphosphate. This chain is GTP cyclohydrolase FolE2, found in Xanthomonas euvesicatoria pv. vesicatoria (strain 85-10) (Xanthomonas campestris pv. vesicatoria).